Consider the following 36-residue polypeptide: Cytochrome b6-f complex subunit 5 (36 aa).

The chain crosses the membrane as a helical span at residues 5–25; sequence LLAGIVLGLVPVTLAGLFVAA.

Belongs to the PetG family. The 4 large subunits of the cytochrome b6-f complex are cytochrome b6, subunit IV (17 kDa polypeptide, PetD), cytochrome f and the Rieske protein, while the 4 small subunits are PetG, PetL, PetM and PetN. The complex functions as a dimer.

Its subcellular location is the cellular thylakoid membrane. Functionally, component of the cytochrome b6-f complex, which mediates electron transfer between photosystem II (PSII) and photosystem I (PSI), cyclic electron flow around PSI, and state transitions. PetG is required for either the stability or assembly of the cytochrome b6-f complex. The chain is Cytochrome b6-f complex subunit 5 from Acaryochloris marina (strain MBIC 11017).